The sequence spans 294 residues: Nucleoside-specific channel-forming protein Tsx (294 aa).

Residues 1 to 22 (MKKTLLAAGAVVALSTTFAAGA) form the signal peptide.

It belongs to the nucleoside-specific channel-forming outer membrane porin (Tsx) (TC 1.B.10) family.

The protein resides in the cell outer membrane. In terms of biological role, functions as a substrate-specific channel for nucleosides and deoxynucleosides. Also functions in albicidin uptake and as receptor for colicin K. Also is a receptor for several Tsx-specific bacteriophages. This is Nucleoside-specific channel-forming protein Tsx from Klebsiella pneumoniae.